A 588-amino-acid chain; its full sequence is MAQEQGHFQLLRADAIRSKLIDTFSLIEHLQGLSQAVPRHTLREILDPSYQQKLMSGDQEQLVRFSIKPRRMGHITHSRRLLSRLRVRCSRMPPLSLWAGWVLDSSVFSKFIISLIFLNTFVLMVEIELMESTNTALWPVKLALEVADWFILLSFIVEILLMWLASFSLFWKDAWNVFDFFVTLLSLLPELVVLLGVPAHSVWLQLLRVCRVLRSLKLFARFRQIKVILLALVRALKSMTFLLMLLLIFFYIFAVTGVYFFREYSRSTIEGLEYNMFFSDLLNSLVTVFILFTLDHWYAVLQDIWKVPESSRVFSSIYVILWLLLGSIIFRNIIVAMMVTNFQNIRSELSEEMSHLEVQYKADMFKQQIIQRRQHSESLRGTSLGKVSEDIIETSDASDDDDDDDDDDDDDDDDDDDKSDATESDNEESDSENSESENSESEKIDPEKDYAKKSYPEKSHPEKSYPEKSHPEKSYPEKSHPKKSYDEQAEAEKVKEESKEKAYPVSHSISSHGSTAADTAFLENLDWETLVHENLPGLMDMDQDDRIVWPRDSLFRYFELLEKLQYNLEERKKLQEFAVQALMSFEDK.

Topologically, residues 1 to 106 are cytoplasmic; that stretch reads MAQEQGHFQL…LWAGWVLDSS (106 aa). A helical transmembrane segment spans residues 107–129; the sequence is VFSKFIISLIFLNTFVLMVEIEL. Topologically, residues 130–138 are extracellular; that stretch reads MESTNTALW. A helical membrane pass occupies residues 139-164; that stretch reads PVKLALEVADWFILLSFIVEILLMWL. The Cytoplasmic segment spans residues 165 to 173; sequence ASFSLFWKD. A helical transmembrane segment spans residues 174 to 198; the sequence is AWNVFDFFVTLLSLLPELVVLLGVP. Over 199-201 the chain is Extracellular; that stretch reads AHS. A helical membrane pass occupies residues 202-220; it reads VWLQLLRVCRVLRSLKLFA. Residues 221-237 are Cytoplasmic-facing; the sequence is RFRQIKVILLALVRALK. Residues 238–260 traverse the membrane as a helical segment; it reads SMTFLLMLLLIFFYIFAVTGVYF. The Extracellular portion of the chain corresponds to 261 to 279; it reads FREYSRSTIEGLEYNMFFS. The helical; Pore-forming intramembrane region spans 280–292; it reads DLLNSLVTVFILF. Residues 293-312 lie on the Extracellular side of the membrane; the sequence is TLDHWYAVLQDIWKVPESSR. A helical membrane pass occupies residues 313 to 339; sequence VFSSIYVILWLLLGSIIFRNIIVAMMV. Over 340–588 the chain is Cytoplasmic; that stretch reads TNFQNIRSEL…VQALMSFEDK (249 aa). The disordered stretch occupies residues 376–512; it reads SESLRGTSLG…YPVSHSISSH (137 aa). A compositionally biased stretch (acidic residues) spans 390–439; the sequence is DIIETSDASDDDDDDDDDDDDDDDDDDDKSDATESDNEESDSENSESENS. A compositionally biased stretch (basic and acidic residues) spans 440-502; that stretch reads ESEKIDPEKD…KVKEESKEKA (63 aa).

This sequence belongs to the cation channel sperm-associated (TC 1.A.1.19) family. As to quaternary structure, component of the CatSper complex or CatSpermasome composed of the core pore-forming members CATSPER1, CATSPER2, CATSPER3 and CATSPER4 as well as auxiliary members CATSPERB, CATSPERG2, CATSPERD, CATSPERE, CATSPERZ, C2CD6/CATSPERT, SLCO6C1, TMEM249, TMEM262 and EFCAB9. HSPA1 may be an additional auxiliary complex member. The core complex members CATSPER1, CATSPER2, CATSPER3 and CATSPER4 form a heterotetrameric channel. The auxiliary CATSPERB, CATSPERG2, CATSPERD and CATSPERE subunits form a pavilion-like structure over the pore which stabilizes the complex through interactions with CATSPER4, CATSPER3, CATSPER1 and CATSPER2 respectively. SLCO6C1 interacts with CATSPERE and TMEM262/CATSPERH interacts with CATSPERB, further stabilizing the complex. C2CD6/CATSPERT interacts at least with CATSPERD and is required for targeting the CatSper complex in the flagellar membrane. Interacts with Ca(v)3.3/CACNA1I, leading to suppression of T-type calcium channel activity. In terms of tissue distribution, testis-specific.

It is found in the cell projection. It localises to the cilium. Its subcellular location is the flagellum membrane. It carries out the reaction Ca(2+)(in) = Ca(2+)(out). Its activity is regulated as follows. In contrast to the human ortholog, not activated by progesterone. Activated by intracellular alkalinization. Pore-forming subunit of the CatSper complex, a sperm-specific voltage-gated calcium channel that plays a central role in sperm cell hyperactivation. Controls calcium entry to mediate the hyperactivated motility, a step needed for sperm motility which is essential late in the preparation of sperm for fertilization. The protein is Cation channel sperm-associated protein 2 (Catsper2) of Mus musculus (Mouse).